The primary structure comprises 297 residues: MKSKSSRTRVAILGSGSIGLDLMFKVKASEQFDLKFVVGRNANSDGLRLARSCNVETSSDGLDFLKAHEDAYDLVFDATSAAAHKVNNRFFSDAGKFVIDLTPAKVGRLCVPCINLDDMGAEQNVNLITCGGQASLPLAYALKQAVDEIDYLEVVSAIASRSAGIATRENIDEYMTTTEYALAKFSDAKKTKAILNINPAEPGVRMQTTLYAYARYRDFDRVRASVADMVEKVREYVPGYRLVVEPLESQGRITIGLTVRGRGDYLPEYAGNLDIINCAALAVASHRHATARLGATQ.

15-18 (SGSI) is a binding site for NAD(+). Residue Cys-130 is the Acyl-thioester intermediate of the active site. NAD(+) contacts are provided by residues 162-170 (SAGIATREN) and Asn-272.

This sequence belongs to the acetaldehyde dehydrogenase family.

It carries out the reaction acetaldehyde + NAD(+) + CoA = acetyl-CoA + NADH + H(+). This is Acetaldehyde dehydrogenase (mhpF) from Burkholderia pseudomallei (strain K96243).